The sequence spans 431 residues: Beta-lactamase hydrolase-like protein (431 aa).

Positions 212, 214, and 286 each coordinate Zn(2+). Substrate is bound at residue Asp-309.

It belongs to the metallo-beta-lactamase superfamily. Zn(2+) serves as cofactor.

In terms of biological role, could play a role in cell adherence or biofilm development. The protein is Beta-lactamase hydrolase-like protein of Xylella fastidiosa (strain Temecula1 / ATCC 700964).